Here is a 215-residue protein sequence, read N- to C-terminus: Protein-L-isoaspartate O-methyltransferase (215 aa).

Ser62 is a catalytic residue.

It belongs to the methyltransferase superfamily. L-isoaspartyl/D-aspartyl protein methyltransferase family.

The protein resides in the cytoplasm. The enzyme catalyses [protein]-L-isoaspartate + S-adenosyl-L-methionine = [protein]-L-isoaspartate alpha-methyl ester + S-adenosyl-L-homocysteine. Its function is as follows. Catalyzes the methyl esterification of L-isoaspartyl residues in peptides and proteins that result from spontaneous decomposition of normal L-aspartyl and L-asparaginyl residues. It plays a role in the repair and/or degradation of damaged proteins. This is Protein-L-isoaspartate O-methyltransferase from Ruegeria pomeroyi (strain ATCC 700808 / DSM 15171 / DSS-3) (Silicibacter pomeroyi).